We begin with the raw amino-acid sequence, 228 residues long: L-ribulose-5-phosphate 4-epimerase UlaF (228 aa).

Substrate is bound by residues Gly26–Asn27, Ser43–Gly44, and Ser72–Ser73. 3 residues coordinate Zn(2+): Asp74, His93, and His95. Asp118 acts as the Proton donor/acceptor in catalysis. A Zn(2+)-binding site is contributed by His167. The active-site Proton donor/acceptor is the Tyr225.

It belongs to the aldolase class II family. AraD/FucA subfamily. It depends on Zn(2+) as a cofactor.

It catalyses the reaction L-ribulose 5-phosphate = D-xylulose 5-phosphate. It participates in cofactor degradation; L-ascorbate degradation; D-xylulose 5-phosphate from L-ascorbate: step 4/4. Functionally, catalyzes the isomerization of L-ribulose 5-phosphate to D-xylulose 5-phosphate. Is involved in the anaerobic L-ascorbate utilization. This chain is L-ribulose-5-phosphate 4-epimerase UlaF, found in Shigella sonnei (strain Ss046).